A 327-amino-acid chain; its full sequence is Phosphate acyltransferase (327 aa).

The protein belongs to the PlsX family. Homodimer. Probably interacts with PlsY.

It is found in the cytoplasm. It catalyses the reaction a fatty acyl-[ACP] + phosphate = an acyl phosphate + holo-[ACP]. It participates in lipid metabolism; phospholipid metabolism. Functionally, catalyzes the reversible formation of acyl-phosphate (acyl-PO(4)) from acyl-[acyl-carrier-protein] (acyl-ACP). This enzyme utilizes acyl-ACP as fatty acyl donor, but not acyl-CoA. The protein is Phosphate acyltransferase of Mycoplasma mobile (strain ATCC 43663 / 163K / NCTC 11711) (Mesomycoplasma mobile).